The sequence spans 526 residues: ATLQCSWALTPTDCKTTKPLAEKALDLINKWRRDGYLFQLLRVADAHLDGAESATVYYLVLDVKETDCSVLSRKHWEDCDPDLTKRPSLDVIGQCKVIATRYSDEYQTLRLNDFNCTTSSVSSALANTKDSPVLFDFIEDTEPFRKSADKALEVYKSESEAYASFRVDRVERVTRVKGGERTNYYVDFSVRNCSRSHFHRHPAFGFCRADLSFDVEASNLENPEDVIISCEVFNFEEHGNISGFRPHLGKTPLGTDGSRDHHHPHKPHKFGCPPPQEGEDFSEGPPLQGGTPPLSPPFRPRCRHRPFGTNETHRFPHHRISVNIIHRPPPHGHHPHGPPPHGHHPHGPPPHGHPPHGPPPRHPPHGPPPHGHPPHGPPPHGHPPHGPPPHGHPPHGPPPHGHPPHGHGFHDHGPCDPPSHKEGPQDLHQHAMGPPPKHPGKRGPGKGHFPFHWRRIGSVYQLPPLQKGEVLPLPEANFPQLLLRNHTHPLKPEIQPFPQVASERCPEEFNGEFAQLSKFFPSTFPK.

The N-terminal stretch at alanine 1–alanine 8 is a signal peptide. 2 consecutive Cystatin domains span residues leucine 9–alanine 126 and asparagine 127–glycine 243. 6 disulfide bridges follow: cysteine 14-cysteine 505, cysteine 68-cysteine 79, cysteine 95-cysteine 116, cysteine 193-cysteine 415, cysteine 207-cysteine 230, and cysteine 272-cysteine 302. The segment at tryptophan 31–lysine 74 is interaction with ATP5F1A. Asparagine 115 and asparagine 192 each carry an N-linked (GlcNAc...) asparagine glycan. N-linked (GlcNAc...) asparagine glycosylation occurs at asparagine 240. Residues glycine 243–phenylalanine 449 form a disordered region. Residues aspartate 260 to lysine 269 are compositionally biased toward basic residues. An N-linked (GlcNAc...) asparagine glycan is attached at asparagine 310. The span at proline 328–histidine 346 shows a compositional bias: basic residues. Residues glycine 347 to glycine 401 are compositionally biased toward pro residues. Positions glycine 408–glutamine 429 are enriched in basic and acidic residues. Basic residues predominate over residues histidine 438–phenylalanine 449. Asparagine 485 carries N-linked (GlcNAc...) asparagine glycosylation.

Interacts with THBS1 (via the TSP type I repeats); the interaction blocks the antiangiogenic effect of THBS1 with CD36. Interacts with THBS2; the interaction blocks the antiangiogenic effect of THBS2 with CD36. Interacts with HPSE; the interaction is enhanced at acidic pH, partially inhibits binding of HPSE to cell surface receptors and modulates its enzymatic activity. Interacts (via the HRR domain) with TMP1; the interaction partially mediates the antiangiogenic properties of HRG. Interacts with kappa and lambda light chains of IgG molecules. Interacts with ATP5F1A; the interaction occurs on the surface of T-cells and alters their cell morphology in concert with CONA. Binds IgG molecules containing kappa and lambda light chains and inhibits the formation of insoluble immunoglobulin complexes. Interacts with F12; the interaction, which is enhanced in the presence of zinc ions and inhibited by heparin-binding to HRG, inhibits factor XII autoactivation and contact-initiated coagulation. Interacts with PLG (via its Kringle domains); the interaction tethers PLG to the cell surface and enhances its activation. Interacts (via the HRR domain) with TPM1; the interaction appears to contribute to the antiangiogenic properties of the HRR domain. N-glycosylated. Post-translationally, proteolytic cleavage produces several HRG fragments which are mostly disulfide-linked and, therefore, not released. On platelet activation, may release a 33 kDa antiangiogenic peptide which encompasses the HRR.

It localises to the secreted. Its function is as follows. Plasma glycoprotein that binds a number of ligands such as heme, heparin, heparan sulfate, thrombospondin, plasminogen, and divalent metal ions. Inhibits rosette formation. Acts as an adapter protein and implicated in regulating many processes such as immune complex and pathogen clearance, cell adhesion, angiogenesis, coagulation and fibrinolysis. Mediates clearance of necrotic cells through enhancing the phagocytosis of necrotic cells in a heparan sulfate-dependent pathway. This process can be regulated by the presence of certain HRG ligands such as heparin and zinc ions. Binds to IgG subclasses of immunoglobins containing kappa and lambda light chains with different affinities regulating their clearance and inhibiting the formation of insoluble immune complexes. Binds T-cells and alters the cell morphology Modulates angiogenesis by blocking the CD6-mediated antiangiongenic effect of thrombospondins, THBS1 and THBS2. Tethers plasminogen to the cell surface. This chain is Histidine-rich glycoprotein (HRG), found in Oryctolagus cuniculus (Rabbit).